The following is a 332-amino-acid chain: UPF0194 membrane protein YbhG (332 aa).

A signal peptide spans 1–26 (MMKKPVVIELAVVVLAAVVAGGYWWY). The stretch at 108–209 (EEIAQAAAAV…LNLQDSTLIA (102 aa)) forms a coiled coil.

This sequence belongs to the UPF0194 family.

The protein localises to the periplasm. This chain is UPF0194 membrane protein YbhG (ybhG), found in Shigella sonnei (strain Ss046).